Reading from the N-terminus, the 555-residue chain is Vacuolar fusion protein MON1 homolog A (555 aa).

Basic and acidic residues predominate over residues 1 to 12; sequence MAADMQRKRSSE. The segment at 1 to 87 is disordered; it reads MAADMQRKRS…RGPPPLPADM (87 aa). Residues Ser-31 and Ser-56 each carry the phosphoserine modification. Thr-61 carries the phosphothreonine modification. At Ser-91 the chain carries Phosphoserine. The tract at residues 114–147 is disordered; it reads PGSSEDWLDPPGAVGRPATEPPREGTAEGDEEDA.

This sequence belongs to the MON1/SAND family. As to quaternary structure, interacts with CCZ1. Found in a complex with RMC1, CCZ1, MON1A and MON1B. The MON1A-CCZ1B complex interacts with RIMOC1. The MON1A-CCZ1B complex interacts with RAB7A and this interaction is enhanced in the presence of RIMOC1.

Its function is as follows. Plays an important role in membrane trafficking through the secretory apparatus. Not involved in endocytic trafficking to lysosomes. Acts in concert with CCZ1, as a guanine exchange factor (GEF) for RAB7, promotes the exchange of GDP to GTP, converting it from an inactive GDP-bound form into an active GTP-bound form. The sequence is that of Vacuolar fusion protein MON1 homolog A (MON1A) from Macaca fascicularis (Crab-eating macaque).